Here is a 643-residue protein sequence, read N- to C-terminus: tRNA 5-methylaminomethyl-2-thiouridine biosynthesis bifunctional protein MnmC (643 aa).

The tract at residues Met-1–Ala-223 is tRNA (mnm(5)s(2)U34)-methyltransferase. An FAD-dependent cmnm(5)s(2)U34 oxidoreductase region spans residues Ile-247 to Gly-643.

The protein in the N-terminal section; belongs to the methyltransferase superfamily. tRNA (mnm(5)s(2)U34)-methyltransferase family. This sequence in the C-terminal section; belongs to the DAO family. Requires FAD as cofactor.

The protein resides in the cytoplasm. It carries out the reaction 5-aminomethyl-2-thiouridine(34) in tRNA + S-adenosyl-L-methionine = 5-methylaminomethyl-2-thiouridine(34) in tRNA + S-adenosyl-L-homocysteine + H(+). Catalyzes the last two steps in the biosynthesis of 5-methylaminomethyl-2-thiouridine (mnm(5)s(2)U) at the wobble position (U34) in tRNA. Catalyzes the FAD-dependent demodification of cmnm(5)s(2)U34 to nm(5)s(2)U34, followed by the transfer of a methyl group from S-adenosyl-L-methionine to nm(5)s(2)U34, to form mnm(5)s(2)U34. The sequence is that of tRNA 5-methylaminomethyl-2-thiouridine biosynthesis bifunctional protein MnmC from Burkholderia cenocepacia (strain HI2424).